The following is a 495-amino-acid chain: Iroquois-class homeodomain protein irx-4-B (495 aa).

Positions Gly-141–Asn-203 form a DNA-binding region, homeobox; TALE-type. Residues Asn-203–Glu-245 form a disordered region. Over residues Ile-235–Glu-245 the composition is skewed to basic and acidic residues.

The protein belongs to the TALE/IRO homeobox family.

The protein resides in the nucleus. Acts partially redundantly with other irx members in neural patterning. Required for formation of the posterior forebrain, midbrain, hindbrain, and to a lesser extent, spinal cord. Patterns the neuroectoderm in both the anterior/posterior and dorsal/ventral axes. Does not appear to play a role in pronephros kidney development. The chain is Iroquois-class homeodomain protein irx-4-B (irx4-b) from Xenopus laevis (African clawed frog).